The primary structure comprises 215 residues: Phosphatidylserine decarboxylase proenzyme (215 aa).

S181 acts as the Schiff-base intermediate with substrate; via pyruvic acid in catalysis. S181 bears the Pyruvic acid (Ser); by autocatalysis mark.

It belongs to the phosphatidylserine decarboxylase family. PSD-A subfamily. Heterodimer of a large membrane-associated beta subunit and a small pyruvoyl-containing alpha subunit. Pyruvate is required as a cofactor. In terms of processing, is synthesized initially as an inactive proenzyme. Formation of the active enzyme involves a self-maturation process in which the active site pyruvoyl group is generated from an internal serine residue via an autocatalytic post-translational modification. Two non-identical subunits are generated from the proenzyme in this reaction, and the pyruvate is formed at the N-terminus of the alpha chain, which is derived from the carboxyl end of the proenzyme. The post-translation cleavage follows an unusual pathway, termed non-hydrolytic serinolysis, in which the side chain hydroxyl group of the serine supplies its oxygen atom to form the C-terminus of the beta chain, while the remainder of the serine residue undergoes an oxidative deamination to produce ammonia and the pyruvoyl prosthetic group on the alpha chain.

The protein resides in the cell membrane. It carries out the reaction a 1,2-diacyl-sn-glycero-3-phospho-L-serine + H(+) = a 1,2-diacyl-sn-glycero-3-phosphoethanolamine + CO2. It functions in the pathway phospholipid metabolism; phosphatidylethanolamine biosynthesis; phosphatidylethanolamine from CDP-diacylglycerol: step 2/2. Catalyzes the formation of phosphatidylethanolamine (PtdEtn) from phosphatidylserine (PtdSer). The protein is Phosphatidylserine decarboxylase proenzyme of Polynucleobacter asymbioticus (strain DSM 18221 / CIP 109841 / QLW-P1DMWA-1) (Polynucleobacter necessarius subsp. asymbioticus).